A 164-amino-acid polypeptide reads, in one-letter code: Ribosome maturation factor RimP (164 aa).

The protein belongs to the RimP family.

It is found in the cytoplasm. In terms of biological role, required for maturation of 30S ribosomal subunits. This chain is Ribosome maturation factor RimP, found in Cellvibrio japonicus (strain Ueda107) (Pseudomonas fluorescens subsp. cellulosa).